The chain runs to 211 residues: FMN-dependent NADH:quinone oxidoreductase 2 (211 aa).

An FMN-binding site is contributed by 17–19; sequence SYS.

This sequence belongs to the azoreductase type 1 family. As to quaternary structure, homodimer. FMN is required as a cofactor.

The enzyme catalyses 2 a quinone + NADH + H(+) = 2 a 1,4-benzosemiquinone + NAD(+). The catalysed reaction is N,N-dimethyl-1,4-phenylenediamine + anthranilate + 2 NAD(+) = 2-(4-dimethylaminophenyl)diazenylbenzoate + 2 NADH + 2 H(+). Functionally, quinone reductase that provides resistance to thiol-specific stress caused by electrophilic quinones. Its function is as follows. Also exhibits azoreductase activity. Catalyzes the reductive cleavage of the azo bond in aromatic azo compounds to the corresponding amines. This is FMN-dependent NADH:quinone oxidoreductase 2 from Bacillus licheniformis (strain ATCC 14580 / DSM 13 / JCM 2505 / CCUG 7422 / NBRC 12200 / NCIMB 9375 / NCTC 10341 / NRRL NRS-1264 / Gibson 46).